Consider the following 103-residue polypeptide: Cell division protein FtsB (103 aa).

Over 1 to 3 (MGK) the chain is Cytoplasmic. A helical membrane pass occupies residues 4 to 21 (LTLLLLALLVWLQYSLWF). At 22 to 103 (GKNGIHDYSR…RAQTAGQNNR (82 aa)) the chain is on the periplasmic side. A coiled-coil region spans residues 33–62 (NDDVVAQQATNAKLKARNDQLFAEIDDLNG).

The protein belongs to the FtsB family. As to quaternary structure, part of a complex composed of FtsB, FtsL and FtsQ.

Its subcellular location is the cell inner membrane. In terms of biological role, essential cell division protein. May link together the upstream cell division proteins, which are predominantly cytoplasmic, with the downstream cell division proteins, which are predominantly periplasmic. This is Cell division protein FtsB from Salmonella arizonae (strain ATCC BAA-731 / CDC346-86 / RSK2980).